The following is a 99-amino-acid chain: Large ribosomal subunit protein uL23 (99 aa).

It belongs to the universal ribosomal protein uL23 family. As to quaternary structure, part of the 50S ribosomal subunit. Contacts protein L29, and trigger factor when it is bound to the ribosome.

In terms of biological role, one of the early assembly proteins it binds 23S rRNA. One of the proteins that surrounds the polypeptide exit tunnel on the outside of the ribosome. Forms the main docking site for trigger factor binding to the ribosome. In Magnetococcus marinus (strain ATCC BAA-1437 / JCM 17883 / MC-1), this protein is Large ribosomal subunit protein uL23.